A 490-amino-acid polypeptide reads, in one-letter code: UDP-N-acetylmuramoyl-L-alanyl-D-glutamate--2,6-diaminopimelate ligase (490 aa).

Residues Leu-22, Ser-24, and 39-41 (HQT) each bind UDP-N-acetyl-alpha-D-muramoyl-L-alanyl-D-glutamate. 111–117 (GTNGKTT) contacts ATP. Residues Asn-152, 153-154 (TT), Ser-180, Gln-186, and Arg-188 contribute to the UDP-N-acetyl-alpha-D-muramoyl-L-alanyl-D-glutamate site. Lys-220 carries the N6-carboxylysine modification. Residues Arg-385, 409-412 (DNPR), Gly-460, and Glu-464 contribute to the meso-2,6-diaminopimelate site. Residues 409–412 (DNPR) carry the Meso-diaminopimelate recognition motif motif.

It belongs to the MurCDEF family. MurE subfamily. The cofactor is Mg(2+). Carboxylation is probably crucial for Mg(2+) binding and, consequently, for the gamma-phosphate positioning of ATP.

Its subcellular location is the cytoplasm. The enzyme catalyses UDP-N-acetyl-alpha-D-muramoyl-L-alanyl-D-glutamate + meso-2,6-diaminopimelate + ATP = UDP-N-acetyl-alpha-D-muramoyl-L-alanyl-gamma-D-glutamyl-meso-2,6-diaminopimelate + ADP + phosphate + H(+). It participates in cell wall biogenesis; peptidoglycan biosynthesis. In terms of biological role, catalyzes the addition of meso-diaminopimelic acid to the nucleotide precursor UDP-N-acetylmuramoyl-L-alanyl-D-glutamate (UMAG) in the biosynthesis of bacterial cell-wall peptidoglycan. The chain is UDP-N-acetylmuramoyl-L-alanyl-D-glutamate--2,6-diaminopimelate ligase from Yersinia pestis.